Reading from the N-terminus, the 138-residue chain is Basic phospholipase A2 PL-X' (138 aa).

Residues 1-16 form the signal peptide; sequence MRTLWIMAVLLVGVEG. Disulfide bonds link C42-C131, C44-C60, C59-C111, C65-C138, C66-C104, C73-C97, and C91-C102. 3 residues coordinate Ca(2+): Y43, G45, and G47. H63 is an active-site residue. Residue D64 participates in Ca(2+) binding. The active site involves D105.

This sequence belongs to the phospholipase A2 family. Group II subfamily. D49 sub-subfamily. Ca(2+) is required as a cofactor. In terms of tissue distribution, expressed by the venom gland.

The protein localises to the secreted. The enzyme catalyses a 1,2-diacyl-sn-glycero-3-phosphocholine + H2O = a 1-acyl-sn-glycero-3-phosphocholine + a fatty acid + H(+). In terms of biological role, PLA2 catalyzes the calcium-dependent hydrolysis of the 2-acyl groups in 3-sn-phosphoglycerides. The sequence is that of Basic phospholipase A2 PL-X' from Protobothrops flavoviridis (Habu).